Here is a 953-residue protein sequence, read N- to C-terminus: Coatomer subunit beta (953 aa).

At threonine 2 the chain carries N-acetylthreonine. HEAT repeat units lie at residues 96–131 (HEMILVCDAYRKDLQHPNEFIRGSTLRFLCKLKEAE), 132–168 (LLEPLMPAIRACLEHRHSYVRRNAVLAIYTIYRNFEH), 240–276 (SERARFIRCIYNLLQSSSPAVKYEAAGTLVTLSSAPT), 277–314 (AIKAAAQCYIDLIIKESDNNVKLIVLDRLIELKEHPAH), 316–353 (RVLQDLVMDILRVLSTPDLEVRKKTLQLALDLVSSRNV), and 396–433 (DMAANVIPVLMEFLSDNNEAAAADVLEFVREAIQRFDN). Lysine 494 carries the post-translational modification N6-acetyllysine.

In terms of assembly, oligomeric complex that consists of at least the alpha, beta, beta', gamma, delta, epsilon and zeta subunits. Interacts with SCYL1. Interacts with COPG1. Interacts (via trunk domain) with ARF1 (via switch I region); the interaction is direct. Interacts with KCNK2/TREK (via N-terminus); this interaction increases the channel-mediated whole cell currents and promotes plasma membrane expression of KCNK2/TREK. Interacts with anthrax lethal factor (LF); this interaction may facilitate endosomal vesicle membrane translocation of LF and its release from the lumen of endosomal vesicles to external milieu. Interacts with CAPN8 and PRKCE. Interacts with ARF1 (myristoylated); this interaction is required for binding of COPB1 to Golgi membranes. Interacts with STX17. Interacts with TMEM115. Interacts with HLA-G-B2M complex; this interaction mediates the endoplasmic reticulum (ER) retrieval of HLA-E-B2M complexes that bind low affinity peptides. Interacts with TMEM41B. (Microbial infection) Interacts (via C-terminus) with HIV-1 Nef; the interaction is direct. Post-translationally, proteolytically cleaved between Ser-528 and Ser-529 by CAPN8.

It is found in the cytoplasm. The protein resides in the golgi apparatus membrane. Its subcellular location is the cytoplasmic vesicle. The protein localises to the COPI-coated vesicle membrane. It localises to the cell membrane. It is found in the endoplasmic reticulum-Golgi intermediate compartment. In terms of biological role, the coatomer is a cytosolic protein complex that binds to dilysine motifs and reversibly associates with Golgi non-clathrin-coated vesicles, which further mediate biosynthetic protein transport from the ER, via the Golgi up to the trans Golgi network. Coatomer complex is required for budding from Golgi membranes, and is essential for the retrograde Golgi-to-ER transport of dilysine-tagged proteins. In mammals, the coatomer can only be recruited by membranes associated to ADP-ribosylation factors (ARFs), which are small GTP-binding proteins; the complex also influences the Golgi structural integrity, as well as the processing, activity, and endocytic recycling of LDL receptors. Plays a functional role in facilitating the transport of kappa-type opioid receptor mRNAs into axons and enhances translation of these proteins. Required for limiting lipid storage in lipid droplets. Involved in lipid homeostasis by regulating the presence of perilipin family members PLIN2 and PLIN3 at the lipid droplet surface and promoting the association of adipocyte surface triglyceride lipase (PNPLA2) with the lipid droplet to mediate lipolysis. Involved in the Golgi disassembly and reassembly processes during cell cycle. Involved in autophagy by playing a role in early endosome function. Plays a role in organellar compartmentalization of secretory compartments including endoplasmic reticulum (ER)-Golgi intermediate compartment (ERGIC), Golgi, trans-Golgi network (TGN) and recycling endosomes, and in biosynthetic transport of CAV1. Promotes degradation of Nef cellular targets CD4 and MHC class I antigens by facilitating their trafficking to degradative compartments. The polypeptide is Coatomer subunit beta (Homo sapiens (Human)).